The primary structure comprises 581 residues: Putative adenine deaminase BH0637 (581 aa).

The protein belongs to the metallo-dependent hydrolases superfamily. Adenine deaminase family.

The enzyme catalyses adenine + H2O + H(+) = hypoxanthine + NH4(+). The protein is Putative adenine deaminase BH0637 of Halalkalibacterium halodurans (strain ATCC BAA-125 / DSM 18197 / FERM 7344 / JCM 9153 / C-125) (Bacillus halodurans).